The primary structure comprises 172 residues: Shikimate kinase (172 aa).

14–19 (GAGKST) provides a ligand contact to ATP. Residue Ser18 participates in Mg(2+) binding. Asp36, Arg60, and Gly82 together coordinate substrate. ATP is bound at residue Arg120. Arg139 contributes to the substrate binding site. Gln156 provides a ligand contact to ATP.

It belongs to the shikimate kinase family. Monomer. Mg(2+) is required as a cofactor.

It localises to the cytoplasm. The catalysed reaction is shikimate + ATP = 3-phosphoshikimate + ADP + H(+). Its pathway is metabolic intermediate biosynthesis; chorismate biosynthesis; chorismate from D-erythrose 4-phosphate and phosphoenolpyruvate: step 5/7. Functionally, catalyzes the specific phosphorylation of the 3-hydroxyl group of shikimic acid using ATP as a cosubstrate. The sequence is that of Shikimate kinase from Aliivibrio salmonicida (strain LFI1238) (Vibrio salmonicida (strain LFI1238)).